A 199-amino-acid polypeptide reads, in one-letter code: Recombination protein RecR (199 aa).

A C4-type zinc finger spans residues 58–73 (CKICFNITDKEVCDIC). The 96-residue stretch at 81–176 (STICVVSHPM…KVTRIAHGIP (96 aa)) folds into the Toprim domain.

This sequence belongs to the RecR family.

Its function is as follows. May play a role in DNA repair. It seems to be involved in an RecBC-independent recombinational process of DNA repair. It may act with RecF and RecO. The polypeptide is Recombination protein RecR (Caldanaerobacter subterraneus subsp. tengcongensis (strain DSM 15242 / JCM 11007 / NBRC 100824 / MB4) (Thermoanaerobacter tengcongensis)).